The primary structure comprises 327 residues: Undecaprenyl-phosphate 4-deoxy-4-formamido-L-arabinose transferase (327 aa).

The next 2 helical transmembrane spans lie at 233–253 (ILSL…LLLI) and 268–288 (VFTL…GMGL).

It belongs to the glycosyltransferase 2 family.

It is found in the cell inner membrane. It catalyses the reaction UDP-4-deoxy-4-formamido-beta-L-arabinose + di-trans,octa-cis-undecaprenyl phosphate = 4-deoxy-4-formamido-alpha-L-arabinopyranosyl di-trans,octa-cis-undecaprenyl phosphate + UDP. It participates in glycolipid biosynthesis; 4-amino-4-deoxy-alpha-L-arabinose undecaprenyl phosphate biosynthesis; 4-amino-4-deoxy-alpha-L-arabinose undecaprenyl phosphate from UDP-4-deoxy-4-formamido-beta-L-arabinose and undecaprenyl phosphate: step 1/2. Its pathway is bacterial outer membrane biogenesis; lipopolysaccharide biosynthesis. Catalyzes the transfer of 4-deoxy-4-formamido-L-arabinose from UDP to undecaprenyl phosphate. The modified arabinose is attached to lipid A and is required for resistance to polymyxin and cationic antimicrobial peptides. This chain is Undecaprenyl-phosphate 4-deoxy-4-formamido-L-arabinose transferase, found in Pectobacterium carotovorum subsp. carotovorum (strain PC1).